The chain runs to 328 residues: WUSCHEL-related homeobox 6 (328 aa).

Polar residues predominate over residues 1-11; that stretch reads MEGSSNSPDRQ. A disordered region spans residues 1–45; it reads MEGSSNSPDRQSSGGSPPEERGGGGSGGGGGRSAAGEPVRSRWTP. Over residues 23-33 the composition is skewed to gly residues; the sequence is GGGSGGGGGRS. Residues 38 to 102 constitute a DNA-binding region (homeobox; WUS-type); sequence PVRSRWTPKP…NRRSRSRRRQ (65 aa).

Belongs to the WUS homeobox family.

Its subcellular location is the nucleus. Its function is as follows. Transcription factor which may be involved in developmental processes. This chain is WUSCHEL-related homeobox 6 (WOX6), found in Oryza sativa subsp. indica (Rice).